The primary structure comprises 977 residues: Protein bicaudal C homolog 1 (977 aa).

The segment at Met1–Leu43 is disordered. Residues Ser27, Ser32, and Ser45 each carry the phosphoserine modification. 2 consecutive KH domains span residues Arg134 to Ile201 and Pro286 to Leu350. The residue at position 400 (Lys400) is an N6-acetyllysine. A compositionally biased stretch (polar residues) spans Ser590 to Glu621. Disordered stretches follow at residues Ser590–Gly622, Gly667–Arg702, and Glu794–Glu848. Ser614 and Ser681 each carry phosphoserine. Basic and acidic residues predominate over residues Leu692 to Arg702. Residues Glu794–Ser803 show a composition bias toward low complexity. The SAM domain occupies Phe875 to Asn938.

Belongs to the BicC family. As to quaternary structure, interacts (via KH domains) with ANKS6 (via SAM domain) in an RNA-dependent manner. Interacts with ANKS3. As to expression, in the adult, predominantly expressed in heart and kidney. In 8 week old mice, expressed in growing primary oocytes and in the stromal cells of the theca.

Its subcellular location is the cytoplasm. Functionally, putative RNA-binding protein. May be involved in regulating gene expression during embryonic development. The sequence is that of Protein bicaudal C homolog 1 (Bicc1) from Mus musculus (Mouse).